A 238-amino-acid chain; its full sequence is Protein TIFY 3A (238 aa).

Positions glutamate 39–alanine 74 constitute a Tify 1 domain. Residues proline 101–threonine 120 carry the Jas 1 motif. A Nuclear localization signal 1 motif is present at residues alanine 103 to arginine 110. The 36-residue stretch at serine 125–alanine 160 folds into the Tify 2 domain. The Jas 2 signature appears at proline 197–serine 222. A Nuclear localization signal 2 motif is present at residues alanine 199 to arginine 206. The segment at lysine 219–threonine 238 is disordered.

Belongs to the TIFY/JAZ family. Interacts with MYC2, MYB21, MYB24, AFPH2/NINJA, TIFY10A/JAZ1, TIFY10B/JAZ2, TIFY6B/JAZ3, TIFY6A/JAZ4, TIFY7/JAZ9 and TIFY9/JAZ10. Ubiquitinated. Targeted for degradation by the SCF(COI1) E3 ubiquitin ligase-proteasome pathway during jasmonate signaling.

It is found in the nucleus. In terms of biological role, repressor of jasmonate (JA) responses. Targets MYC2, MYC3 and MYC4 that are JA-dependent transcription activators. The sequence is that of Protein TIFY 3A (TIFY3A) from Arabidopsis thaliana (Mouse-ear cress).